Reading from the N-terminus, the 317-residue chain is Protoheme IX farnesyltransferase (317 aa).

9 helical membrane passes run 29-49 (LILLFLITTAAAMEVAGQGRV), 53-73 (LLLITLGSGTCAAAAANTINC), 102-122 (VFLAVLLAITAFSLLAAFANL), 123-143 (LSACLAMAGIAVYVGVYTHWL), 151-171 (IVIGGAAGAIPPLVGWAAVTG), 179-199 (VLFGMIFVWTPPHFWPLAMLI), 224-241 (IFLYTLALVPTSLLLVYP), 245-267 (VSWGYGVVAIALGSWFIYRAWQL), and 283-303 (FSILYMMLLCAAMVGDRLLLP).

This sequence belongs to the UbiA prenyltransferase family. Protoheme IX farnesyltransferase subfamily.

Its subcellular location is the cell inner membrane. The enzyme catalyses heme b + (2E,6E)-farnesyl diphosphate + H2O = Fe(II)-heme o + diphosphate. The protein operates within porphyrin-containing compound metabolism; heme O biosynthesis; heme O from protoheme: step 1/1. Its function is as follows. Converts heme B (protoheme IX) to heme O by substitution of the vinyl group on carbon 2 of heme B porphyrin ring with a hydroxyethyl farnesyl side group. This Thermosynechococcus vestitus (strain NIES-2133 / IAM M-273 / BP-1) protein is Protoheme IX farnesyltransferase.